Here is a 323-residue protein sequence, read N- to C-terminus: D-alanine--D-alanine ligase (323 aa).

The ATP-grasp domain maps to 102 to 300 (KQIFRAEGIP…FTELVERMLQ (199 aa)). An ATP-binding site is contributed by 130 to 185 (VARLGSPLVVKPSNSGSTVGISLARDEVSLAQGLALASSVSSRVFLERYIPGKEIT). D254, E267, and N269 together coordinate Mg(2+).

This sequence belongs to the D-alanine--D-alanine ligase family. Mg(2+) is required as a cofactor. Mn(2+) serves as cofactor.

The protein resides in the cytoplasm. The catalysed reaction is 2 D-alanine + ATP = D-alanyl-D-alanine + ADP + phosphate + H(+). It participates in cell wall biogenesis; peptidoglycan biosynthesis. Cell wall formation. In Synechococcus sp. (strain JA-3-3Ab) (Cyanobacteria bacterium Yellowstone A-Prime), this protein is D-alanine--D-alanine ligase.